The chain runs to 1432 residues: DNA-directed RNA polymerase subunit beta (1432 aa).

The protein belongs to the RNA polymerase beta chain family. The RNAP catalytic core consists of 2 alpha, 1 beta, 1 beta' and 1 omega subunit. When a sigma factor is associated with the core the holoenzyme is formed, which can initiate transcription.

The enzyme catalyses RNA(n) + a ribonucleoside 5'-triphosphate = RNA(n+1) + diphosphate. Its function is as follows. DNA-dependent RNA polymerase catalyzes the transcription of DNA into RNA using the four ribonucleoside triphosphates as substrates. The sequence is that of DNA-directed RNA polymerase subunit beta from Solibacter usitatus (strain Ellin6076).